Reading from the N-terminus, the 164-residue chain is Putative pre-16S rRNA nuclease (164 aa).

Belongs to the YqgF nuclease family.

It localises to the cytoplasm. In terms of biological role, could be a nuclease involved in processing of the 5'-end of pre-16S rRNA. The sequence is that of Putative pre-16S rRNA nuclease from Synechococcus sp. (strain CC9902).